The chain runs to 151 residues: Transcriptional regulator MraZ (151 aa).

SpoVT-AbrB domains are found at residues 5–52 (ANAI…PLSE) and 81–124 (AVDL…DEDA).

The protein belongs to the MraZ family. As to quaternary structure, forms oligomers.

It localises to the cytoplasm. Its subcellular location is the nucleoid. This is Transcriptional regulator MraZ from Pseudomonas savastanoi pv. phaseolicola (strain 1448A / Race 6) (Pseudomonas syringae pv. phaseolicola (strain 1448A / Race 6)).